The following is a 1146-amino-acid chain: Nitrogen permease regulator 3 (1146 aa).

The signal sequence occupies residues 1-25 (MDECLPNSCLLGVHLVISTHSGPQI). The residue at position 76 (Ser-76) is a Phosphoserine. Disordered stretches follow at residues 90–159 (AITP…LSDS), 177–221 (SSLS…SPQM), 237–340 (SGTN…HHYH), and 440–466 (GRWR…ISRK). Over residues 105 to 123 (LPPTRSHANTVGSQSSIPA) the composition is skewed to polar residues. 2 stretches are compositionally biased toward low complexity: residues 150-159 (ETSSSGLSDS) and 177-196 (SSLS…SSSP). Polar residues-rich tracts occupy residues 201–221 (LSRT…SPQM), 237–253 (SGTN…SQNF), and 277–303 (KPSQ…AFTG). Residues 304–315 (SCSISSKKSLSS) show a composition bias toward low complexity. Residues 323-334 (LRNSSLNDTPGQ) show a composition bias toward polar residues. Over residues 441–455 (RWRKSKHKNKTRSKR) the composition is skewed to basic residues. Ser-486 and Ser-987 each carry phosphoserine. The tract at residues 979-1047 (KTNTARRPSM…SRVDDRDDNE (69 aa)) is disordered. Composition is skewed to basic and acidic residues over residues 986–1004 (PSMD…DGQS) and 1025–1042 (NNKD…RVDD).

Belongs to the NPR3 family. Component of the SEA complex composed of at least IML1/SEA1, RTC1/SEA2, MTC5/SEA3, NPR2, NPR3, SEA4, SEC13 and SEH1. Forms a heterodimer with NPR2.

The protein resides in the vacuole membrane. Its function is as follows. Component of the SEA complex which coats the vacuolar membrane and is involved in intracellular trafficking, autophagy, response to nitrogen starvation, and amino acid biogenesis. Mediates inactivation of the TORC1 complex in response to amino acid starvation. Required for meiotic nuclear division. This chain is Nitrogen permease regulator 3 (NPR3), found in Saccharomyces cerevisiae (strain ATCC 204508 / S288c) (Baker's yeast).